The primary structure comprises 90 residues: Large ribosomal subunit protein bL27 (90 aa).

Residues Met1–Leu21 are disordered.

Belongs to the bacterial ribosomal protein bL27 family.

This is Large ribosomal subunit protein bL27 from Metamycoplasma arthritidis (strain 158L3-1) (Mycoplasma arthritidis).